The following is a 738-amino-acid chain: Phosphoribosylformylglycinamidine synthase subunit PurL (738 aa).

Histidine 41 is a catalytic residue. ATP-binding residues include tyrosine 44 and lysine 83. Residue glutamate 85 participates in Mg(2+) binding. Substrate contacts are provided by residues 86–89 (SHNH) and arginine 108. Histidine 87 acts as the Proton acceptor in catalysis. Position 109 (aspartate 109) interacts with Mg(2+). Residue glutamine 233 participates in substrate binding. Aspartate 261 is a binding site for Mg(2+). 305–307 (ESQ) contributes to the substrate binding site. Positions 490 and 527 each coordinate ATP. Asparagine 528 is a binding site for Mg(2+). Serine 530 is a binding site for substrate.

Belongs to the FGAMS family. As to quaternary structure, monomer. Part of the FGAM synthase complex composed of 1 PurL, 1 PurQ and 2 PurS subunits.

The protein localises to the cytoplasm. The catalysed reaction is N(2)-formyl-N(1)-(5-phospho-beta-D-ribosyl)glycinamide + L-glutamine + ATP + H2O = 2-formamido-N(1)-(5-O-phospho-beta-D-ribosyl)acetamidine + L-glutamate + ADP + phosphate + H(+). Its pathway is purine metabolism; IMP biosynthesis via de novo pathway; 5-amino-1-(5-phospho-D-ribosyl)imidazole from N(2)-formyl-N(1)-(5-phospho-D-ribosyl)glycinamide: step 1/2. Functionally, part of the phosphoribosylformylglycinamidine synthase complex involved in the purines biosynthetic pathway. Catalyzes the ATP-dependent conversion of formylglycinamide ribonucleotide (FGAR) and glutamine to yield formylglycinamidine ribonucleotide (FGAM) and glutamate. The FGAM synthase complex is composed of three subunits. PurQ produces an ammonia molecule by converting glutamine to glutamate. PurL transfers the ammonia molecule to FGAR to form FGAM in an ATP-dependent manner. PurS interacts with PurQ and PurL and is thought to assist in the transfer of the ammonia molecule from PurQ to PurL. The protein is Phosphoribosylformylglycinamidine synthase subunit PurL of Alkaliphilus metalliredigens (strain QYMF).